Consider the following 123-residue polypeptide: Galanin peptides (123 aa).

The first 19 residues, 1 to 19 (MPRGCALLLASLLLASALS), serve as a signal peptide directing secretion. The propeptide occupies 20 to 30 (ATLGLGSPVKE). Residue alanine 61 is modified to Alanine amide. Serine 116 and serine 117 each carry phosphoserine.

It belongs to the galanin family.

The protein localises to the secreted. In terms of biological role, endocrine hormone of the central and peripheral nervous systems that binds and activates the G protein-coupled receptors GALR1, GALR2, and GALR3. This small neuropeptide may regulate diverse physiologic functions including contraction of smooth muscle of the gastrointestinal and genitourinary tract, growth hormone and insulin release and adrenal secretion. The sequence is that of Galanin peptides (GAL) from Sus scrofa (Pig).